Reading from the N-terminus, the 84-residue chain is Anthracycline acyl carrier protein DpsG (84 aa).

Residues 3 to 80 (ELSLAELREI…SMLIFVNERL (78 aa)) form the Carrier domain. Position 40 is an O-(pantetheine 4'-phosphoryl)serine (S40).

Its pathway is antibiotic biosynthesis; daunorubicin biosynthesis. It functions in the pathway antibiotic biosynthesis; carminomycin biosynthesis. The protein operates within antibiotic biosynthesis; rhodomycin biosynthesis. It participates in antibiotic biosynthesis; aclacinomycin biosynthesis. Functionally, involved in the biosynthesis of aklanonate which is an important precursor common to the formation of the clinically significant anthracyclines such as carminomycin, daunorubicin (daunomycin), rhodomycin, aclacinomycin T (aklavin) and aclacinomycin A (aclarubicin). These compounds are aromatic polyketide antibiotics that exhibit high cytotoxicity and are widely applied in the chemotherapy of a variety of cancers. The chain is Anthracycline acyl carrier protein DpsG (dpsG) from Streptomyces peucetius.